A 538-amino-acid chain; its full sequence is Phospho-2-dehydro-3-deoxyheptonate aldolase 1, chloroplastic (538 aa).

Residues 1–74 constitute a chloroplast transit peptide; sequence MALSSTSTTN…KPSKSSPPAA (74 aa). Positions 55–82 are disordered; it reads DSNKIPIVSDKPSKSSPPAATATTAPAP. A compositionally biased stretch (low complexity) spans 68 to 82; that stretch reads KSSPPAATATTAPAP. Blocked amino end (Thr) is present on T75.

The protein belongs to the class-II DAHP synthase family.

Its subcellular location is the plastid. It localises to the chloroplast. The catalysed reaction is D-erythrose 4-phosphate + phosphoenolpyruvate + H2O = 7-phospho-2-dehydro-3-deoxy-D-arabino-heptonate + phosphate. It participates in metabolic intermediate biosynthesis; chorismate biosynthesis; chorismate from D-erythrose 4-phosphate and phosphoenolpyruvate: step 1/7. Activation by tryptophan (a hysteretic factor). The sequence is that of Phospho-2-dehydro-3-deoxyheptonate aldolase 1, chloroplastic (SHKA) from Solanum tuberosum (Potato).